Consider the following 139-residue polypeptide: Glucanase inhibitor protein 3 (139 aa).

One can recognise a Peptidase S1 domain in the interval Val1–Lys138. 2 disulfide bridges follow: Cys61–Cys73 and Cys83–Cys114.

The protein belongs to the peptidase S1 family.

The protein resides in the secreted. In terms of biological role, secreted effector that suppresses host plant glucan elicitor-mediated defense responses. Targets host endoglucanases and inhibits the endoglucanase-mediated release of elicitor-active glucan oligosaccharides from P.sojae cell walls. The sequence is that of Glucanase inhibitor protein 3 from Phytophthora sojae (Soybean stem and root rot agent).